The chain runs to 274 residues: Small ribosomal subunit protein uS3 (274 aa).

The region spanning 38-106 (IRRLLSSGLE…QVQLNILEVK (69 aa)) is the KH type-2 domain. The tract at residues 215 to 274 (AAAAPAGADRPRRERPSGTRPRRSGASGTTATGTDAGRAAGGEEAAPDAAAPVEAQSTES) is disordered. The segment covering 238–266 (SGASGTTATGTDAGRAAGGEEAAPDAAAP) has biased composition (low complexity).

It belongs to the universal ribosomal protein uS3 family. As to quaternary structure, part of the 30S ribosomal subunit. Forms a tight complex with proteins S10 and S14.

In terms of biological role, binds the lower part of the 30S subunit head. Binds mRNA in the 70S ribosome, positioning it for translation. The sequence is that of Small ribosomal subunit protein uS3 from Mycobacterium tuberculosis (strain ATCC 25177 / H37Ra).